The sequence spans 268 residues: Ubiquinone biosynthesis protein COQ4 homolog, mitochondrial (268 aa).

Positions 171, 172, 175, and 187 each coordinate Zn(2+).

Belongs to the COQ4 family. In terms of assembly, component of a multi-subunit COQ enzyme complex. It depends on Zn(2+) as a cofactor.

It localises to the mitochondrion inner membrane. The enzyme catalyses a 4-hydroxy-3-methoxy-5-(all-trans-polyprenyl)benzoate + H(+) = a 2-methoxy-6-(all-trans-polyprenyl)phenol + CO2. The protein operates within cofactor biosynthesis; ubiquinone biosynthesis. In terms of biological role, lyase that catalyzes the C1-decarboxylation of 4-hydroxy-3-methoxy-5-(all-trans-polyprenyl)benzoic acid into 2-methoxy-6-(all-trans-polyprenyl)phenol during ubiquinone biosynthesis. In Drosophila erecta (Fruit fly), this protein is Ubiquinone biosynthesis protein COQ4 homolog, mitochondrial.